The primary structure comprises 342 residues: Succinylglutamate desuccinylase (342 aa).

The Zn(2+) site is built by histidine 62, glutamate 65, and histidine 158. The active site involves glutamate 222.

This sequence belongs to the AspA/AstE family. Succinylglutamate desuccinylase subfamily. The cofactor is Zn(2+).

The enzyme catalyses N-succinyl-L-glutamate + H2O = L-glutamate + succinate. Its pathway is amino-acid degradation; L-arginine degradation via AST pathway; L-glutamate and succinate from L-arginine: step 5/5. In terms of biological role, transforms N(2)-succinylglutamate into succinate and glutamate. In Shewanella frigidimarina (strain NCIMB 400), this protein is Succinylglutamate desuccinylase.